The sequence spans 562 residues: Dihydroxy-acid dehydratase (562 aa).

Asp78 provides a ligand contact to Mg(2+). Cys119 contributes to the [2Fe-2S] cluster binding site. 2 residues coordinate Mg(2+): Asp120 and Lys121. The residue at position 121 (Lys121) is an N6-carboxylysine. Cys192 lines the [2Fe-2S] cluster pocket. Residue Glu450 coordinates Mg(2+). The active-site Proton acceptor is Ser476.

Belongs to the IlvD/Edd family. In terms of assembly, homodimer. It depends on [2Fe-2S] cluster as a cofactor. Mg(2+) is required as a cofactor.

The catalysed reaction is (2R)-2,3-dihydroxy-3-methylbutanoate = 3-methyl-2-oxobutanoate + H2O. It carries out the reaction (2R,3R)-2,3-dihydroxy-3-methylpentanoate = (S)-3-methyl-2-oxopentanoate + H2O. The protein operates within amino-acid biosynthesis; L-isoleucine biosynthesis; L-isoleucine from 2-oxobutanoate: step 3/4. It participates in amino-acid biosynthesis; L-valine biosynthesis; L-valine from pyruvate: step 3/4. Its function is as follows. Functions in the biosynthesis of branched-chain amino acids. Catalyzes the dehydration of (2R,3R)-2,3-dihydroxy-3-methylpentanoate (2,3-dihydroxy-3-methylvalerate) into 2-oxo-3-methylpentanoate (2-oxo-3-methylvalerate) and of (2R)-2,3-dihydroxy-3-methylbutanoate (2,3-dihydroxyisovalerate) into 2-oxo-3-methylbutanoate (2-oxoisovalerate), the penultimate precursor to L-isoleucine and L-valine, respectively. This chain is Dihydroxy-acid dehydratase, found in Nautilia profundicola (strain ATCC BAA-1463 / DSM 18972 / AmH).